We begin with the raw amino-acid sequence, 269 residues long: Hydroxyethylthiazole kinase (269 aa).

Substrate is bound at residue methionine 41. ATP-binding residues include arginine 117 and serine 165. A substrate-binding site is contributed by glycine 192.

It belongs to the Thz kinase family. The cofactor is Mg(2+).

The enzyme catalyses 5-(2-hydroxyethyl)-4-methylthiazole + ATP = 4-methyl-5-(2-phosphooxyethyl)-thiazole + ADP + H(+). It participates in cofactor biosynthesis; thiamine diphosphate biosynthesis; 4-methyl-5-(2-phosphoethyl)-thiazole from 5-(2-hydroxyethyl)-4-methylthiazole: step 1/1. Its function is as follows. Catalyzes the phosphorylation of the hydroxyl group of 4-methyl-5-beta-hydroxyethylthiazole (THZ). The chain is Hydroxyethylthiazole kinase from Actinobacillus succinogenes (strain ATCC 55618 / DSM 22257 / CCUG 43843 / 130Z).